A 208-amino-acid chain; its full sequence is Octanoyltransferase (208 aa).

Residues 30 to 208 (GTASEAVFIL…ILKQEFYKIF (179 aa)) form the BPL/LPL catalytic domain. Substrate-binding positions include 69-76 (RGGKFTYH), 142-144 (SIG), and 155-157 (GVA). The active-site Acyl-thioester intermediate is the Cys173.

This sequence belongs to the LipB family.

The protein localises to the cytoplasm. It catalyses the reaction octanoyl-[ACP] + L-lysyl-[protein] = N(6)-octanoyl-L-lysyl-[protein] + holo-[ACP] + H(+). It functions in the pathway protein modification; protein lipoylation via endogenous pathway; protein N(6)-(lipoyl)lysine from octanoyl-[acyl-carrier-protein]: step 1/2. Its function is as follows. Catalyzes the transfer of endogenously produced octanoic acid from octanoyl-acyl-carrier-protein onto the lipoyl domains of lipoate-dependent enzymes. Lipoyl-ACP can also act as a substrate although octanoyl-ACP is likely to be the physiological substrate. This chain is Octanoyltransferase, found in Orientia tsutsugamushi (strain Ikeda) (Rickettsia tsutsugamushi).